A 205-amino-acid chain; its full sequence is Basonuclin zinc finger protein homolog (205 aa).

C2H2-type zinc fingers lie at residues 107–130 (VACDICSKSFCDKGALKIHTSAVH) and 135–164 (HTCTVTGCGKQFSSRRSRNRHSSNNNPKLH). The disordered stretch occupies residues 145 to 168 (QFSSRRSRNRHSSNNNPKLHMPES).

As to expression, expressed in the VA and VB motor neurons and at lower levels in the SABV neuron pair.

It localises to the nucleus. Probable transcription factor. Involved in motor neuron fate determination and maintenance, acting as a transcriptional repressor to counteract gene activation by transcription factor unc-3 in a subset of motor neurons. Required throughout development to repress transcription by unc-3, probably acting by binding to specific promoter elements. Represses expression of DA and DB motor neuron-specific effector genes, such as unc-129 and unc-53, in VA and VB motor neurons. The sequence is that of Basonuclin zinc finger protein homolog from Caenorhabditis elegans.